A 130-amino-acid polypeptide reads, in one-letter code: Galectin-2 (130 aa).

Residues 4–130 (KFEVKDLNMK…GLQISSFKLE (127 aa)) enclose the Galectin domain. 65–71 (WGQEQRE) is a binding site for a beta-D-galactoside.

As to quaternary structure, homodimer.

Functionally, this protein binds beta-galactoside. Its physiological function is not yet known. The protein is Galectin-2 (Lgals2) of Mus musculus (Mouse).